The chain runs to 204 residues: Chaperone protein TorD (204 aa).

It belongs to the TorD/DmsD family. TorD subfamily.

It is found in the cytoplasm. Its function is as follows. Involved in the biogenesis of TorA. Acts on TorA before the insertion of the molybdenum cofactor and, as a result, probably favors a conformation of the apoenzyme that is competent for acquiring the cofactor. The sequence is that of Chaperone protein TorD from Shewanella baltica (strain OS223).